We begin with the raw amino-acid sequence, 814 residues long: E3 ubiquitin-protein ligase TRIM71 (814 aa).

An RING-type zinc finger spans residues 12–76 (CPLCKEMCVS…SLQLRCPVCD (65 aa)). The disordered stretch occupies residues 111–146 (QQQSNGGRTASNRQRSASCSSSGLLRRAPPSQSEPR). Over residues 120–138 (ASNRQRSASCSSSGLLRRA) the composition is skewed to low complexity. The segment at 142–189 (QSEPRCSSCDDGNGASSHCLDCQENLCDNCLRAHQRVRLTKDHFIERF) adopts a B box-type 1; atypical zinc-finger fold. Zn(2+) is bound by residues C147, C150, C171, H175, C224, H227, C247, and H252. The segment at 219–260 (PERLYCQQHDEEVLHFYCDSCSVPICRECTMGRHAGHSFVYL) adopts a B box-type 2 zinc-finger fold. A coiled-coil region spans residues 282 to 370 (RQAIQLSLEQ…INAVQQVLEE (89 aa)). One copy of the Filamin repeat lies at 425 to 526 (SSGAFAALTK…IENSPFKVNV (102 aa)). 6 NHL repeats span residues 539–582 (TLSF…FKPC), 586–629 (HHKF…FTFE), 633–676 (LLKF…FGPD), 680–723 (LNKY…IKPD), 727–770 (AHFL…FEPN), and 774–814 (LCKF…ILAF).

This sequence belongs to the TRIM/RBCC family.

Its subcellular location is the cytoplasm. The protein localises to the P-body. The catalysed reaction is S-ubiquitinyl-[E2 ubiquitin-conjugating enzyme]-L-cysteine + [acceptor protein]-L-lysine = [E2 ubiquitin-conjugating enzyme]-L-cysteine + N(6)-ubiquitinyl-[acceptor protein]-L-lysine.. It functions in the pathway protein modification; protein ubiquitination. Functionally, E3 ubiquitin-protein ligase that cooperates with the microRNAs (miRNAs) machinery and promotes embryonic stem cells proliferation and maintenance. Binds to miRNAs and participates in post-transcriptional repression of transcripts. Required to maintain proliferation and prevent premature differentiation of neural progenitor cells during early neural development. In Xenopus tropicalis (Western clawed frog), this protein is E3 ubiquitin-protein ligase TRIM71 (trim71).